The chain runs to 475 residues: GDP-fucose protein O-fucosyltransferase 3 (475 aa).

Residues 1-8 lie on the Cytoplasmic side of the membrane; sequence MVRMRRKR. Residues 9-29 traverse the membrane as a helical; Signal-anchor for type II membrane protein segment; that stretch reads LWASCICFAAFFFLLVTLQVI. The Lumenal portion of the chain corresponds to 30–475; the sequence is TELGNSENKA…QEFWMLVFKQ (446 aa). N-linked (GlcNAc...) asparagine glycans are attached at residues Asn-107, Asn-165, and Asn-315. A disulfide bridge links Cys-386 with Cys-389. A glycan (N-linked (GlcNAc...) asparagine) is linked at Asn-462.

The protein belongs to the glycosyltransferase 10 family.

It localises to the endoplasmic reticulum membrane. The catalysed reaction is L-threonyl-[protein] + GDP-beta-L-fucose = 3-O-(alpha-L-fucosyl)-L-threonyl-[protein] + GDP + H(+). It carries out the reaction L-seryl-[protein] + GDP-beta-L-fucose = 3-O-(alpha-L-fucosyl)-L-seryl-[protein] + GDP + H(+). It functions in the pathway protein modification; protein glycosylation. Functionally, protein O-fucosyltransferase that specifically catalyzes O-fucosylation of serine or threonine residues in EMI domains of target proteins. Attaches fucose through an O-glycosidic linkage. O-fucosylation of EMI domain-containing proteins may be required for facilitating protein folding and secretion. This is GDP-fucose protein O-fucosyltransferase 3 (FUT10) from Gallus gallus (Chicken).